Reading from the N-terminus, the 354-residue chain is Protein RecA (354 aa).

ATP is bound at residue 65-72 (GPESSGKT).

The protein belongs to the RecA family.

Its subcellular location is the cytoplasm. Functionally, can catalyze the hydrolysis of ATP in the presence of single-stranded DNA, the ATP-dependent uptake of single-stranded DNA by duplex DNA, and the ATP-dependent hybridization of homologous single-stranded DNAs. It interacts with LexA causing its activation and leading to its autocatalytic cleavage. This chain is Protein RecA, found in Aeromonas hydrophila subsp. hydrophila (strain ATCC 7966 / DSM 30187 / BCRC 13018 / CCUG 14551 / JCM 1027 / KCTC 2358 / NCIMB 9240 / NCTC 8049).